Consider the following 338-residue polypeptide: tRNA N6-adenosine threonylcarbamoyltransferase (338 aa).

Positions 111 and 115 each coordinate Fe cation. Substrate-binding positions include 134-138 (LVSGG), D167, G180, and N272. Fe cation is bound at residue D300.

The protein belongs to the KAE1 / TsaD family. Requires Fe(2+) as cofactor.

The protein localises to the cytoplasm. The enzyme catalyses L-threonylcarbamoyladenylate + adenosine(37) in tRNA = N(6)-L-threonylcarbamoyladenosine(37) in tRNA + AMP + H(+). In terms of biological role, required for the formation of a threonylcarbamoyl group on adenosine at position 37 (t(6)A37) in tRNAs that read codons beginning with adenine. Is involved in the transfer of the threonylcarbamoyl moiety of threonylcarbamoyl-AMP (TC-AMP) to the N6 group of A37, together with TsaE and TsaB. TsaD likely plays a direct catalytic role in this reaction. The polypeptide is tRNA N6-adenosine threonylcarbamoyltransferase (Shewanella denitrificans (strain OS217 / ATCC BAA-1090 / DSM 15013)).